Reading from the N-terminus, the 148-residue chain is F-box protein At3g55900 (148 aa).

The region spanning 9–59 (CRNLSELPQELLYKILGLLPTRNVVSTSLISHQRRSQFHWMERLKFRYPRL) is the F-box domain.

The polypeptide is F-box protein At3g55900 (Arabidopsis thaliana (Mouse-ear cress)).